Consider the following 433-residue polypeptide: Cell adhesion molecule 2 (433 aa).

The first 24 residues, 1 to 24 (MILQPSALLCLSSLWGVIVQASQG), serve as a signal peptide directing secretion. At 25–365 (QFPVTQNVTV…ALPGPVATDH (341 aa)) the chain is on the extracellular side. The Ig-like V-type domain occupies 27–114 (PVTQNVTVVE…SLFTMPVKTS (88 aa)). 3 N-linked (GlcNAc...) asparagine glycosylation sites follow: asparagine 31, asparagine 41, and asparagine 51. 3 cysteine pairs are disulfide-bonded: cysteine 44/cysteine 104, cysteine 146/cysteine 203, and cysteine 248/cysteine 296. Ig-like C2-type domains lie at 127 to 217 (PHIS…PQIA) and 227 to 312 (PTVR…YVLI). N-linked (GlcNAc...) asparagine glycans are attached at residues asparagine 287 and asparagine 291. The chain crosses the membrane as a helical span at residues 366-386 (ALIGGVVAVVVFVTLCSIILI). At 387–433 (GRYLARHKGTYLTNEAKGAEDAPDADTAIINAEGSQVNAEEKKEYFI) the chain is on the cytoplasmic side.

This sequence belongs to the nectin family.

The protein localises to the membrane. The polypeptide is Cell adhesion molecule 2 (cadm2) (Xenopus tropicalis (Western clawed frog)).